Reading from the N-terminus, the 44-residue chain is Photosystem II reaction center protein J (44 aa).

A helical transmembrane segment spans residues 12-32 (IPLWIVGFVVGSLALGLLGIL).

Belongs to the PsbJ family. In terms of assembly, PSII is composed of 1 copy each of membrane proteins PsbA, PsbB, PsbC, PsbD, PsbE, PsbF, PsbH, PsbI, PsbJ, PsbK, PsbL, PsbM, PsbT, PsbY, PsbZ, Psb30/Ycf12, at least 3 peripheral proteins of the oxygen-evolving complex and a large number of cofactors. It forms dimeric complexes.

Its subcellular location is the plastid. The protein resides in the chloroplast thylakoid membrane. One of the components of the core complex of photosystem II (PSII). PSII is a light-driven water:plastoquinone oxidoreductase that uses light energy to abstract electrons from H(2)O, generating O(2) and a proton gradient subsequently used for ATP formation. It consists of a core antenna complex that captures photons, and an electron transfer chain that converts photonic excitation into a charge separation. The polypeptide is Photosystem II reaction center protein J (Bigelowiella natans (Pedinomonas minutissima)).